A 1342-amino-acid polypeptide reads, in one-letter code: DNA-directed RNA polymerase subunit beta (1342 aa).

This sequence belongs to the RNA polymerase beta chain family. In terms of assembly, the RNAP catalytic core consists of 2 alpha, 1 beta, 1 beta' and 1 omega subunit. When a sigma factor is associated with the core the holoenzyme is formed, which can initiate transcription.

The enzyme catalyses RNA(n) + a ribonucleoside 5'-triphosphate = RNA(n+1) + diphosphate. Functionally, DNA-dependent RNA polymerase catalyzes the transcription of DNA into RNA using the four ribonucleoside triphosphates as substrates. The chain is DNA-directed RNA polymerase subunit beta from Serratia proteamaculans (strain 568).